The following is a 455-amino-acid chain: Phosphomethylpyrimidine synthase (455 aa).

Residues N80, M109, Y139, H175, S195–G197, D236–R239, and E275 contribute to the substrate site. Residue H279 participates in Zn(2+) binding. Y302 is a substrate binding site. H343 is a Zn(2+) binding site. C423, C426, and C431 together coordinate [4Fe-4S] cluster.

The protein belongs to the ThiC family. Requires [4Fe-4S] cluster as cofactor.

The enzyme catalyses 5-amino-1-(5-phospho-beta-D-ribosyl)imidazole + S-adenosyl-L-methionine = 4-amino-2-methyl-5-(phosphooxymethyl)pyrimidine + CO + 5'-deoxyadenosine + formate + L-methionine + 3 H(+). It participates in cofactor biosynthesis; thiamine diphosphate biosynthesis. Its function is as follows. Catalyzes the synthesis of the hydroxymethylpyrimidine phosphate (HMP-P) moiety of thiamine from aminoimidazole ribotide (AIR) in a radical S-adenosyl-L-methionine (SAM)-dependent reaction. In Synechococcus sp. (strain JA-2-3B'a(2-13)) (Cyanobacteria bacterium Yellowstone B-Prime), this protein is Phosphomethylpyrimidine synthase.